A 365-amino-acid chain; its full sequence is Glycolaldehyde reductase (365 aa).

D37, G94, K95, T116, S119, S125, L127, and Y131 together coordinate NAD(+). The Zn(2+) site is built by D171, H254, and H271.

This sequence belongs to the iron-containing alcohol dehydrogenase family. Zn(2+) serves as cofactor.

The enzyme catalyses ethylene glycol + NAD(+) = glycolaldehyde + NADH + H(+). Its activity is regulated as follows. Is subject to substrate inhibition. Its function is as follows. Oxidoreductase involved in the non-carboxylating pentose bisphosphate pathway, a nucleoside degradation pathway present in some halophilic archaea. Catalyzes the reduction of glycolaldehyde to ethylene glycol. Cannot catalyze the oxidation of glycerol 1-phosphate nor the reduction of dihydroxyacetone phosphate (DHAP). The protein is Glycolaldehyde reductase of Halobacterium salinarum (strain ATCC 700922 / JCM 11081 / NRC-1) (Halobacterium halobium).